The following is a 364-amino-acid chain: MSGNSIGQNFVVTTFGESHGVALGCIIDGCPPGLELTEADMQHDLDRRRPGTSRYTTARREPDEVRILSGVFEGKTTGTSIGLLIENTDQRSQDYSNIKDLFRPGHADYTYQQKYGLRDYRGGGRSSARETAMRVAAGAVAKKYLKQVHGISIQGYMSQLGPISAETLDFSQIEQNAFFFPDASKLEALDEYMRELKKSGDSIGAKISVVATGVPVGLGEPVFDRLDADIAHALMGINAVKGVEIGDGFGVVTQKGSEGRDLMSPLGFESNHAGGILGGISSGQPIVAHIALKPTSSISVPGQSMTAQGEMAEVVTKGRHDPCVGIRAVPIAEAMLAIVLMDHLLRHRAQNQDVRSHTPILGMR.

A disordered region spans residues 41-60 (MQHDLDRRRPGTSRYTTARR). Residues Arg-48 and Arg-54 each coordinate NADP(+). FMN is bound by residues 125-127 (RSS), 238-239 (NA), Gly-278, 293-297 (KPTSS), and Arg-319.

The protein belongs to the chorismate synthase family. Homotetramer. FMNH2 serves as cofactor.

It carries out the reaction 5-O-(1-carboxyvinyl)-3-phosphoshikimate = chorismate + phosphate. The protein operates within metabolic intermediate biosynthesis; chorismate biosynthesis; chorismate from D-erythrose 4-phosphate and phosphoenolpyruvate: step 7/7. Catalyzes the anti-1,4-elimination of the C-3 phosphate and the C-6 proR hydrogen from 5-enolpyruvylshikimate-3-phosphate (EPSP) to yield chorismate, which is the branch point compound that serves as the starting substrate for the three terminal pathways of aromatic amino acid biosynthesis. This reaction introduces a second double bond into the aromatic ring system. This chain is Chorismate synthase, found in Shewanella sp. (strain ANA-3).